We begin with the raw amino-acid sequence, 208 residues long: Sodium/potassium-transporting ATPase subunit beta-1-interacting protein 2 (208 aa).

4 consecutive transmembrane segments (helical) span residues 1 to 23 (MGYCSGRCTLIFICGMQLVCVLE), 35 to 55 (APILANFVHIIIVILGLFGTI), 62 to 82 (ITGYAVWLVLWVTWNVFVICF), and 153 to 173 (LQIVLALAGFIYACYVVKCIT).

The protein belongs to the NKAIN family. As to quaternary structure, interacts with ATP1B1. In terms of tissue distribution, expressed in fetal brain. Weakly expressed in adult brain and thymus. Not expressed in any other normal tissue examined.

The protein localises to the cell membrane. This chain is Sodium/potassium-transporting ATPase subunit beta-1-interacting protein 2 (NKAIN2), found in Homo sapiens (Human).